Consider the following 377-residue polypeptide: cAMP-dependent protein kinase type II regulatory subunit (377 aa).

Positions 48 to 69 (ERPSVSHTDQSTDDQLSVNSQD) are enriched in polar residues. Residues 48–78 (ERPSVSHTDQSTDDQLSVNSQDADAEPPVMA) are disordered. Phosphoserine is present on residues Ser-51, Ser-58, Ser-64, Ser-67, and Ser-84. The Pseudophosphorylation motif signature appears at 81–85 (RRKSV). Phosphotyrosine is present on Tyr-90. 3',5'-cyclic AMP-binding positions include 124–239 (LFRS…LLNS), Glu-189, Arg-198, 242–362 (MLKA…YESQ), Glu-311, and Arg-320.

Belongs to the cAMP-dependent kinase regulatory chain family. As to quaternary structure, tetramer, composed of 2 regulatory (R) and 2 catalytic (C) subunits. In the presence of cAMP it dissociates into 2 active monomeric C subunits and an R dimer. Interacts with Akap200. Post-translationally, the pseudophosphorylation site binds to the substrate-binding region of the catalytic chain but is not phosphorylated. The physiological significance of phosphorylations by other kinases is unclear. As to expression, detected in follicle cells, germline-derived cells, germline line stem cells and outer rim of ring canals of nurse cells throughout oogenesis (at protein level).

It localises to the cytoplasm. The protein localises to the cell membrane. In terms of biological role, regulatory subunit of the cAMP-dependent protein kinases involved in cAMP signaling in cells. Mediates membrane association by binding to anchoring proteins, such as Akap200. Might play an essential role in the regulation of neuronal activity in the brain. This is cAMP-dependent protein kinase type II regulatory subunit (Pka-R2) from Drosophila melanogaster (Fruit fly).